A 264-amino-acid chain; its full sequence is Glutamate racemase (264 aa).

Substrate contacts are provided by residues 10-11 (DS) and 42-43 (YG). C73 serves as the catalytic Proton donor/acceptor. 74–75 (NT) is a binding site for substrate. C183 serves as the catalytic Proton donor/acceptor. 184–185 (TH) serves as a coordination point for substrate.

It belongs to the aspartate/glutamate racemases family.

The enzyme catalyses L-glutamate = D-glutamate. Its pathway is cell wall biogenesis; peptidoglycan biosynthesis. In terms of biological role, provides the (R)-glutamate required for cell wall biosynthesis. The polypeptide is Glutamate racemase (Streptococcus pyogenes serotype M18 (strain MGAS8232)).